A 227-amino-acid polypeptide reads, in one-letter code: Translation initiation factor 6 (227 aa).

Belongs to the eIF-6 family.

In terms of biological role, binds to the 50S ribosomal subunit and prevents its association with the 30S ribosomal subunit to form the 70S initiation complex. The protein is Translation initiation factor 6 of Pyrococcus abyssi (strain GE5 / Orsay).